We begin with the raw amino-acid sequence, 458 residues long: Kelch repeat and BTB domain-containing protein 13 (458 aa).

The region spanning 7–74 (TLVQVWVGGQ…LRGDRPALAA (68 aa)) is the BTB domain. Kelch repeat units lie at residues 159 to 209 (AVST…TLGN), 210 to 258 (KLYI…GFDG), 259 to 305 (RLYA…QACG), 307 to 350 (LFVC…VAHR), and 352 to 400 (SLYV…VVRG).

Component of the BCR(KBTBD13) E3 ubiquitin ligase complex, at least composed of CUL3 and KBTBD13 and RBX1. Interacts with CUL3. Post-translationally, autoubiquitinated. As to expression, expressed in skeletal muscle.

It is found in the cytoplasm. The protein operates within protein modification; protein ubiquitination. Functionally, substrate-specific adapter of a BCR (BTB-CUL3-RBX1) E3 ubiquitin ligase complex. The protein is Kelch repeat and BTB domain-containing protein 13 (KBTBD13) of Homo sapiens (Human).